The following is a 255-amino-acid chain: 5-oxoprolinase subunit A 2 (255 aa).

This sequence belongs to the LamB/PxpA family. As to quaternary structure, forms a complex composed of PxpA, PxpB and PxpC.

The catalysed reaction is 5-oxo-L-proline + ATP + 2 H2O = L-glutamate + ADP + phosphate + H(+). Functionally, catalyzes the cleavage of 5-oxoproline to form L-glutamate coupled to the hydrolysis of ATP to ADP and inorganic phosphate. The protein is 5-oxoprolinase subunit A 2 of Agrobacterium fabrum (strain C58 / ATCC 33970) (Agrobacterium tumefaciens (strain C58)).